A 337-amino-acid polypeptide reads, in one-letter code: Outer membrane protein U (337 aa).

The signal sequence occupies residues 1–21 (MKKTLIALSVSAAAMATGVNA).

It belongs to the Gram-negative porin family. In terms of assembly, homotrimer.

The protein resides in the cell outer membrane. In terms of biological role, forms pores that allow passive diffusion of small molecules across the outer membrane. In Vibrio parahaemolyticus serotype O3:K6 (strain RIMD 2210633), this protein is Outer membrane protein U (ompU).